The primary structure comprises 414 residues: Histidine--tRNA ligase (414 aa).

The protein belongs to the class-II aminoacyl-tRNA synthetase family. Homodimer.

It localises to the cytoplasm. The enzyme catalyses tRNA(His) + L-histidine + ATP = L-histidyl-tRNA(His) + AMP + diphosphate + H(+). The polypeptide is Histidine--tRNA ligase (Rickettsia rickettsii (strain Iowa)).